A 166-amino-acid polypeptide reads, in one-letter code: SsrA-binding protein (166 aa).

The segment at 143-166 (HDKREDDKRKQANRDMKSALARYR) is disordered. Residues 144 to 159 (DKREDDKRKQANRDMK) are compositionally biased toward basic and acidic residues.

It belongs to the SmpB family.

Its subcellular location is the cytoplasm. Its function is as follows. Required for rescue of stalled ribosomes mediated by trans-translation. Binds to transfer-messenger RNA (tmRNA), required for stable association of tmRNA with ribosomes. tmRNA and SmpB together mimic tRNA shape, replacing the anticodon stem-loop with SmpB. tmRNA is encoded by the ssrA gene; the 2 termini fold to resemble tRNA(Ala) and it encodes a 'tag peptide', a short internal open reading frame. During trans-translation Ala-aminoacylated tmRNA acts like a tRNA, entering the A-site of stalled ribosomes, displacing the stalled mRNA. The ribosome then switches to translate the ORF on the tmRNA; the nascent peptide is terminated with the 'tag peptide' encoded by the tmRNA and targeted for degradation. The ribosome is freed to recommence translation, which seems to be the essential function of trans-translation. In Prochlorococcus marinus (strain MIT 9211), this protein is SsrA-binding protein.